The following is a 377-amino-acid chain: Succinyl-diaminopimelate desuccinylase (377 aa).

Residue His-66 coordinates Zn(2+). Asp-68 is a catalytic residue. Zn(2+) is bound at residue Asp-99. The Proton acceptor role is filled by Glu-133. Residues Glu-134, Glu-162, and His-348 each contribute to the Zn(2+) site.

Belongs to the peptidase M20A family. DapE subfamily. In terms of assembly, homodimer. It depends on Zn(2+) as a cofactor. Co(2+) is required as a cofactor.

It catalyses the reaction N-succinyl-(2S,6S)-2,6-diaminopimelate + H2O = (2S,6S)-2,6-diaminopimelate + succinate. The protein operates within amino-acid biosynthesis; L-lysine biosynthesis via DAP pathway; LL-2,6-diaminopimelate from (S)-tetrahydrodipicolinate (succinylase route): step 3/3. Its function is as follows. Catalyzes the hydrolysis of N-succinyl-L,L-diaminopimelic acid (SDAP), forming succinate and LL-2,6-diaminopimelate (DAP), an intermediate involved in the bacterial biosynthesis of lysine and meso-diaminopimelic acid, an essential component of bacterial cell walls. The sequence is that of Succinyl-diaminopimelate desuccinylase from Xylella fastidiosa (strain M12).